The sequence spans 227 residues: Ribose-5-phosphate isomerase A (227 aa).

Substrate is bound by residues 26 to 29, 82 to 85, and 95 to 98; these read TGST, DGAD, and KGGG. The Proton acceptor role is filled by Glu104. Lys122 is a substrate binding site.

It belongs to the ribose 5-phosphate isomerase family. Homodimer.

The catalysed reaction is aldehydo-D-ribose 5-phosphate = D-ribulose 5-phosphate. It participates in carbohydrate degradation; pentose phosphate pathway; D-ribose 5-phosphate from D-ribulose 5-phosphate (non-oxidative stage): step 1/1. Catalyzes the reversible conversion of ribose-5-phosphate to ribulose 5-phosphate. In Streptococcus pyogenes serotype M1, this protein is Ribose-5-phosphate isomerase A.